The following is a 369-amino-acid chain: Serine/threonine-protein acetyltransferase HopZ1a (369 aa).

Residues 1–46 (MGNVCVGGSRMSHQVYSPDRADTPPRSERNTPDRRQRAAGDAERTQ) are disordered. Over residues 19–46 (DRADTPPRSERNTPDRRQRAAGDAERTQ) the composition is skewed to basic and acidic residues. Positions 49, 53, and 106 each coordinate 1D-myo-inositol hexakisphosphate. Residues histidine 150 and glutamate 170 contribute to the active site. Histidine 150 is a CoA binding site. CoA is bound by residues alanine 177 and 211–212 (KT). Cysteine 216 is a catalytic residue. Residues asparagine 222, 226–229 (KAHK), and 289–290 (KH) contribute to the 1D-myo-inositol hexakisphosphate site. Lysine 289 carries the N6-acetyllysine; by autocatalysis modification. 292-295 (ASLT) provides a ligand contact to CoA. 1D-myo-inositol hexakisphosphate-binding positions include 314 to 317 (SEGH) and arginine 326. CoA-binding positions include 331-334 (RVKR) and 344-348 (SNTQF). Positions 358 and 362 each coordinate 1D-myo-inositol hexakisphosphate.

The protein belongs to the acetyltransferase YopJ family. As to quaternary structure, interacts with host plant JAZ proteins (e.g. Glycine max JAZ1 and Arabidospis thaliana TIFY10B/JAZ2, TIFY11A/JAZ5, TIFY11B/JAZ6, TIFY5A/JAZ8 and TIFY3B/JAZ12) and triggers their degradation. Binds directly to SZE1 and SZE2 at the host plasma membrane; this interaction with a complex made of, at least, SZE1, BKN2/SZE2, ZAR1 and ZED1 triggers host immunity. Requires 1D-myo-inositol hexakisphosphate as cofactor. Post-translationally, autoacetylated at Lys-289; while autoacetylation at Lys-289 is required for virulence function to some extent, it is not essential.

It localises to the secreted. The protein resides in the host cell membrane. Its subcellular location is the host cytoplasm. It is found in the host cytoskeleton. The protein localises to the host nucleus. The catalysed reaction is L-threonyl-[protein] + acetyl-CoA = O-acetyl-L-threonyl-[protein] + CoA. It catalyses the reaction L-seryl-[protein] + acetyl-CoA = O-acetyl-L-seryl-[protein] + CoA. It carries out the reaction L-lysyl-[protein] + acetyl-CoA = N(6)-acetyl-L-lysyl-[protein] + CoA + H(+). Its activity is regulated as follows. 1D-myo-inositol hexakisphosphate activates protein-acetyltransferase activity via an allosteric mechanism: 1D-myo-inositol hexakisphosphate-binding induces a conformational rearrangement that stimulates the interaction with acetyl-CoA. Acetyltransferase activity is activated by phytic acid. Its function is as follows. Serine/threonine-protein acetyltransferase translocated into infected cells, which impairs host microtubule network and host immunity by mediating acetylation of target proteins. Blocks secretion in host cells by mediating acetylation of host tubulin, thereby impairing host microbubule network. Impairs host cell immunity by mediating acetylation of host TIFY/JAZ transcription repressors (Arabidopsis thaliana TIFY10B/JAZ2, TIFY11A/JAZ5, TIFY11B/JAZ6, TIFY5A/JAZ8, TIFY9/JAZ10 and TIFY3B/JAZ12), thereby activating host jasmonate signaling. This Pseudomonas syringae pv. syringae protein is Serine/threonine-protein acetyltransferase HopZ1a.